The chain runs to 280 residues: 3-deoxy-manno-octulosonate cytidylyltransferase (280 aa).

Belongs to the KdsB family.

Its subcellular location is the cytoplasm. It catalyses the reaction 3-deoxy-alpha-D-manno-oct-2-ulosonate + CTP = CMP-3-deoxy-beta-D-manno-octulosonate + diphosphate. Its pathway is nucleotide-sugar biosynthesis; CMP-3-deoxy-D-manno-octulosonate biosynthesis; CMP-3-deoxy-D-manno-octulosonate from 3-deoxy-D-manno-octulosonate and CTP: step 1/1. It functions in the pathway bacterial outer membrane biogenesis; lipopolysaccharide biosynthesis. Functionally, activates KDO (a required 8-carbon sugar) for incorporation into bacterial lipopolysaccharide in Gram-negative bacteria. The chain is 3-deoxy-manno-octulosonate cytidylyltransferase from Colwellia psychrerythraea (strain 34H / ATCC BAA-681) (Vibrio psychroerythus).